The chain runs to 487 residues: Vacuolar protein sorting-associated protein 30 (487 aa).

The disordered stretch occupies residues 33-129; that stretch reads PQTLKKSSVP…DNPDAPMGSE (97 aa). Positions 52–62 are enriched in basic and acidic residues; sequence QSRKSIYDRVS. A compositionally biased stretch (polar residues) spans 81–94; that stretch reads SSMSFVLLSESQMA. Residues 152 to 282 are a coiled coil; the sequence is VECTEMLVEG…DSQLLEKLQR (131 aa). Positions 283 to 480 are BARA; the sequence is SNVYNDTFCI…LAHASNVTSN (198 aa). The tract at residues 456-481 is required for membrane-association, autophagic function during starvation and normal autophagosome morphology; it reads WTKACKLTLTCCKFLLAHASNVTSNA.

It belongs to the beclin family. In terms of assembly, component of the autophagy-specific VPS34 PI3-kinase complex I; and of the VPS34 PI3-kinase complex II.

The protein resides in the endosome membrane. The protein localises to the vacuole membrane. It localises to the preautophagosomal structure membrane. Its function is as follows. Required for cytoplasm to vacuole transport (Cvt), autophagy, nucleophagy, and mitophagy, as a part of the autophagy-specific VPS34 PI3-kinase complex I. This complex is essential to recruit the ATG8-phosphatidylinositol conjugate and the ATG12-ATG5 conjugate to the pre-autophagosomal structure. Also involved in endosome-to-Golgi retrograde transport as part of the VPS34 PI3-kinase complex II. Autophagy is required for proper vegetative growth, asexual/sexual reproduction, and full virulence. Autophagy is particularly involved in the biosynthesis of deoxynivalenol (DON), an important virulence determinant. This chain is Vacuolar protein sorting-associated protein 30, found in Gibberella zeae (strain ATCC MYA-4620 / CBS 123657 / FGSC 9075 / NRRL 31084 / PH-1) (Wheat head blight fungus).